Here is a 505-residue protein sequence, read N- to C-terminus: Trans-cinnamate 4-monooxygenase (505 aa).

Residues 3-23 (LLLLEKSLIAVFVAVILATVI) traverse the membrane as a helical segment. (E)-cinnamate-binding positions include 213–218 (RSRLAQ) and alanine 306. A heme-binding site is contributed by cysteine 447.

This sequence belongs to the cytochrome P450 family. The cofactor is heme. As to expression, expressed in roots, leaves, stems, flowers and siliques.

The protein localises to the membrane. The enzyme catalyses (E)-cinnamate + reduced [NADPH--hemoprotein reductase] + O2 = (E)-4-coumarate + oxidized [NADPH--hemoprotein reductase] + H2O + H(+). It functions in the pathway phenylpropanoid metabolism; trans-4-coumarate biosynthesis; trans-4-coumarate from trans-cinnamate: step 1/1. Catalyzes the first oxidative step of the phenylpropanoid pathway in higher plants by transforming trans-cinnamate into p-coumarate. The compounds formed by this pathway are essential components for lignification, pollination, and defense against ultraviolet light, predators and pathogens. This Arabidopsis thaliana (Mouse-ear cress) protein is Trans-cinnamate 4-monooxygenase.